A 963-amino-acid polypeptide reads, in one-letter code: Kinesin-1 heavy chain (963 aa).

Ala2 carries the N-acetylalanine modification. The region spanning 8–325 (NIKVMCRFRP…LLFGQRAKTI (318 aa)) is the Kinesin motor domain. An ATP-binding site is contributed by 85-92 (GQTSSGKT). Lys213 is covalently cross-linked (Glycyl lysine isopeptide (Lys-Gly) (interchain with G-Cter in SUMO2)). Residues 330–913 (CVNVELTAEQ…EAVRSKNMAR (584 aa)) are a coiled coil. Residues 908–963 (SKNMARRGHSAQIAKPIRPGQHPAASPTHPGAVRGGGSFVQNNQPVGLRGGGGKQA) form a disordered region. The segment at 915–963 (GHSAQIAKPIRPGQHPAASPTHPGAVRGGGSFVQNNQPVGLRGGGGKQA) is globular. A phosphoserine mark is found at Ser933 and Ser945. Arg956 carries the post-translational modification Omega-N-methylarginine.

Belongs to the TRAFAC class myosin-kinesin ATPase superfamily. Kinesin family. Kinesin subfamily. Oligomer composed of two heavy chains and two light chains. Interacts with GRIP1 and PPP1R42. Interacts with SYBU. Interacts with JAKMIP1. Interacts with PLEKHM2. Interacts with ECPAS. Interacts with ZFYVE27. Found in a complex with OGT, RHOT1, RHOT2 and TRAK1. Interacts with APP (via cytoplasmic domain). As to expression, expressed in the brain (at protein level). Expressed in the brain, liver, kidney, spleen, heart, lung and sciatic nerve.

Its subcellular location is the cytoplasm. The protein localises to the cytoskeleton. It localises to the cytolytic granule membrane. The protein resides in the lysosome membrane. Functionally, microtubule-dependent motor required for normal distribution of mitochondria and lysosomes. Can induce formation of neurite-like membrane protrusions in non-neuronal cells in a ZFYVE27-dependent manner. Regulates centrosome and nuclear positioning during mitotic entry. During the G2 phase of the cell cycle in a BICD2-dependent manner, antagonizes dynein function and drives the separation of nuclei and centrosomes. Required for anterograde axonal transportation of MAPK8IP3/JIP3 which is essential for MAPK8IP3/JIP3 function in axon elongation. Through binding with PLEKHM2 and ARL8B, directs lysosome movement toward microtubule plus ends. Involved in NK cell-mediated cytotoxicity. Drives the polarization of cytolytic granules and microtubule-organizing centers (MTOCs) toward the immune synapse between effector NK lymphocytes and target cells. This chain is Kinesin-1 heavy chain, found in Rattus norvegicus (Rat).